Here is a 234-residue protein sequence, read N- to C-terminus: Probable Ufm1-specific protease 1 (234 aa).

Residues Cys70, Asp194, and His196 contribute to the active site.

The protein belongs to the peptidase C78 family.

In terms of biological role, thiol protease which recognizes and hydrolyzes the peptide bond at the C-terminal Gly of UFM1, a ubiquitin-like modifier protein bound to a number of target proteins. The polypeptide is Probable Ufm1-specific protease 1 (Drosophila melanogaster (Fruit fly)).